The chain runs to 568 residues: MPASISRSTYAAMFGPTTGDRLRLGDTDLIIEVERDLTTYGEEVKFGGGKVIRDGMGQSQRTRADGAMDTVITNALILDWSGIYKADVGLRDGRIAKIGKAGNPDTQPGVDIVIGPGTEIIAGEGRILTAGGMDAHIHFICPQQIEDSLHSGITTMLGGGTGPAHGTLATTCTPGPWHIGRMLQAADAFPINLAFAGKGNASLPAGLEEQVRAGASCLKLHEDWGTTPAAIDCCLTVADAMDVQVMIHTDTLNESGFVENTLAAIGGRTIHAFHTEGAGGGHAPDIIKVVGAANVIPSSTNPTMPYTANTVEEHLDMLMVCHHLDRSIPEDVAFAESRIRKETIAAEDILHDMGAFSVISSDSQAMGRVGEVITRTWQTAHKMKVQRGRLAEETGANDNMRVRRYIAKYTINPAIAHGLSHHIGSVEEGKRADLVLWTPAFFGAKPDMVLLGGMIVCAQMGDPNGSIPAQPFYSRPMFGAFGGALHASAVTFVSQAAQADGVGERLRLQKGTLAVEGTRGIGKADMKLNAHRPAIEVNPETYEVRADGEILTCQPLAELPLAQRYFLY.

The Urease domain maps to 131 to 568 (GGMDAHIHFI…LPLAQRYFLY (438 aa)). Ni(2+)-binding residues include H136, H138, and K219. K219 is modified (N6-carboxylysine). H221 is a binding site for substrate. Ni(2+) is bound by residues H248 and H274. Residue H322 is the Proton donor of the active site. D362 contacts Ni(2+).

The protein belongs to the metallo-dependent hydrolases superfamily. Urease alpha subunit family. Heterotrimer of UreA (gamma), UreB (beta) and UreC (alpha) subunits. Three heterotrimers associate to form the active enzyme. Ni cation serves as cofactor. Carboxylation allows a single lysine to coordinate two nickel ions.

It localises to the cytoplasm. It catalyses the reaction urea + 2 H2O + H(+) = hydrogencarbonate + 2 NH4(+). It participates in nitrogen metabolism; urea degradation; CO(2) and NH(3) from urea (urease route): step 1/1. In Cereibacter sphaeroides (strain ATCC 17025 / ATH 2.4.3) (Rhodobacter sphaeroides), this protein is Urease subunit alpha.